The primary structure comprises 91 residues: Mercuric transport protein periplasmic component (91 aa).

The N-terminal stretch at 1–19 (MKKLFASLALAAAVAPVWA) is a signal peptide. The HMA domain occupies 22–88 (QTVTLAVPGM…ATADAGYPSS (67 aa)). C33 and C36 together coordinate Hg(2+).

The protein belongs to the MerP family. In terms of assembly, monomer.

It localises to the periplasm. In terms of biological role, involved in mercury resistance. Acts as a mercury scavenger that specifically binds to a mercuric ion in the periplasm and probably passes it to the cytoplasmic mercuric reductase MerA via the mercuric transport protein MerT. This Shigella flexneri protein is Mercuric transport protein periplasmic component.